The following is a 2192-amino-acid chain: BEACH domain-containing protein lvsE (2192 aa).

Disordered regions lie at residues 948-969, 996-1065, 1160-1303, and 1343-1363; these read STSL…TSTG, TTTT…DEPE, NESQ…NNLS, and DENG…SSSN. The segment covering 996–1049 has biased composition (low complexity); sequence TTTTTTTTTTTTTTSTTSNTGNDSPLSIESPISSPVLIENTTNTTNTTTTNTTN. The segment covering 1171-1187 has biased composition (polar residues); the sequence is NIDNLNPNTGLPYNKST. The span at 1188–1231 shows a compositional bias: low complexity; the sequence is NNLSNVNNVNNNNNNNSNNINVSGNNTIGPSSSKSPLRNSRSMS. Residues 1232–1243 are compositionally biased toward polar residues; it reads IGSSATKSPSRQ. Low complexity-rich tracts occupy residues 1253 to 1303 and 1350 to 1363; these read NNNS…NNLS and SSPN…SSSN. A BEACH-type PH domain is found at 1366–1491; sequence IEEEKFIGSW…ESIQIFNKIV (126 aa). A BEACH domain is found at 1504–1795; the sequence is DHPSKIIKKS…QLFSKPHPIR (292 aa). Positions 1823–1849 are enriched in low complexity; that stretch reads GTINSSFSSTSTSTSTSSPPPSTLNSP. The disordered stretch occupies residues 1823–1851; the sequence is GTINSSFSSTSTSTSTSSPPPSTLNSPQG. 3 WD repeats span residues 1973 to 2012, 2022 to 2061, and 2156 to 2192; these read FHHD…IKDS, SHDE…YQRS, and DSPA…VKDL.

This is BEACH domain-containing protein lvsE (lvsE) from Dictyostelium discoideum (Social amoeba).